Here is a 73-residue protein sequence, read N- to C-terminus: Small ribosomal subunit protein bS18 (73 aa).

The protein belongs to the bacterial ribosomal protein bS18 family. In terms of assembly, part of the 30S ribosomal subunit. Forms a tight heterodimer with protein bS6.

Functionally, binds as a heterodimer with protein bS6 to the central domain of the 16S rRNA, where it helps stabilize the platform of the 30S subunit. This chain is Small ribosomal subunit protein bS18, found in Prochlorococcus marinus (strain SARG / CCMP1375 / SS120).